The sequence spans 742 residues: Photosystem I P700 chlorophyll a apoprotein A2 2 (742 aa).

Helical transmembrane passes span 46–69 (IFAT…FHVA), 135–158 (LYQG…LHLQ), 175–199 (LNHH…HVAI), 273–291 (MAHH…GHMY), 334–357 (LHFQ…QHMY), 373–399 (AALY…IFWV), 421–443 (AIIS…LYVH), and 524–542 (FLVH…LICV). 2 residues coordinate [4Fe-4S] cluster: Cys-566 and Cys-575. Helical transmembrane passes span 583–604 (SFYL…YWHW) and 651–673 (LSVW…MFLI). The chlorophyll a site is built by His-662, Met-670, and Tyr-678. Trp-679 contributes to the phylloquinone binding site. A helical membrane pass occupies residues 715–735 (LVGLAHFTVGYILTYAAFLIA).

It belongs to the PsaA/PsaB family. In terms of assembly, the PsaA/B heterodimer binds the P700 chlorophyll special pair and subsequent electron acceptors. PSI consists of a core antenna complex that captures photons, and an electron transfer chain that converts photonic excitation into a charge separation. The cyanobacterial PSI reaction center is composed of one copy each of PsaA,B,C,D,E,F,I,J,K,L,M and X, and forms trimeric complexes. The cofactor is PSI electron transfer chain: 5 chlorophyll a, 1 chlorophyll a', 2 phylloquinones and 3 4Fe-4S clusters. PSI core antenna: 90 chlorophyll a, 22 carotenoids, 3 phospholipids and 1 galactolipid. P700 is a chlorophyll a/chlorophyll a' dimer, A0 is one or more chlorophyll a, A1 is one or both phylloquinones and FX is a shared 4Fe-4S iron-sulfur center..

Its subcellular location is the cellular thylakoid membrane. It catalyses the reaction reduced [plastocyanin] + hnu + oxidized [2Fe-2S]-[ferredoxin] = oxidized [plastocyanin] + reduced [2Fe-2S]-[ferredoxin]. In terms of biological role, psaA and PsaB bind P700, the primary electron donor of photosystem I (PSI), as well as the electron acceptors A0, A1 and FX. PSI is a plastocyanin/cytochrome c6-ferredoxin oxidoreductase, converting photonic excitation into a charge separation, which transfers an electron from the donor P700 chlorophyll pair to the spectroscopically characterized acceptors A0, A1, FX, FA and FB in turn. Oxidized P700 is reduced on the lumenal side of the thylakoid membrane by plastocyanin or cytochrome c6. The sequence is that of Photosystem I P700 chlorophyll a apoprotein A2 2 from Trichormus variabilis (strain ATCC 29413 / PCC 7937) (Anabaena variabilis).